We begin with the raw amino-acid sequence, 81 residues long: Small ribosomal subunit protein bS16 (81 aa).

The protein belongs to the bacterial ribosomal protein bS16 family.

The polypeptide is Small ribosomal subunit protein bS16 (Desulfotalea psychrophila (strain LSv54 / DSM 12343)).